The sequence spans 488 residues: U3 small nucleolar RNA-associated protein 6 (488 aa).

4 HAT repeats span residues 31–63 (NNIIKTRRVFEEKLARRQVKLNDFLSYIQYEIN), 87–119 (AGPRKVLFLFLRATNKFFGDVTLWLDYIHYAQK), 121–153 (KAVNIVGKICVAALQKHPNNAELWVVACDHEFS), and 156–188 (ANVSAARALMNRALRLNQENPVIWAAYFRLELS).

The protein belongs to the UTP6 family. Component of the ribosomal small subunit (SSU) processome, composed of the 35S pre-rRNA precursor, the U3 snoRNA, and at least 40 protein subunits. Interacts with U3 snoRNA.

The protein localises to the nucleus. The protein resides in the nucleolus. Functionally, component of the SSU processome, a pre-ribosomal particle required for the maturation of the 18S rRNA from the 35S pre-rRNA precursor. This Schizosaccharomyces pombe (strain 972 / ATCC 24843) (Fission yeast) protein is U3 small nucleolar RNA-associated protein 6 (utp6).